The following is a 220-amino-acid chain: LHFPL tetraspan subfamily member 1 protein (220 aa).

The signal sequence occupies residues 1 to 20; the sequence is MRNSLTMVGTFWAFLSLVTA. 2 helical membrane-spanning segments follow: residues 86 to 106 and 122 to 142; these read VVTG…VLGC and AAQF…PLGW. N-linked (GlcNAc...) asparagine glycosylation occurs at Asn-153. A helical membrane pass occupies residues 165 to 185; sequence LGWAYYCAGGGAAAAMLICTW.

The protein belongs to the LHFP family. As to expression, widely expressed. Strongly expressed in vagina and ovary. Weakly expressed in spleen, kidney, thymus, testis, brain, lung, intestine and uterus.

It is found in the membrane. This is LHFPL tetraspan subfamily member 1 protein from Mus musculus (Mouse).